Here is a 1232-residue protein sequence, read N- to C-terminus: Anoctamin-8 (1232 aa).

A disordered region spans residues 1-32; that stretch reads MAEAASGAGGTSLEGERGKRPPPEGEPAAPAS. At alanine 2 the chain carries N-acetylalanine. The Extracellular segment spans residues 2–244; it reads AEAASGAGGT…DDICDYFGVK (243 aa). Positions 14 to 23 are enriched in basic and acidic residues; that stretch reads EGERGKRPPP. Residues 245-265 form a helical membrane-spanning segment; sequence IAMYFAWLGFYTSAMVYPAVF. Topologically, residues 266–281 are cytoplasmic; that stretch reads GSVLYTFTEADQTSRD. The helical transmembrane segment at 282–302 threads the bilayer; the sequence is VSCVVFALFNVIWSTLFLEEW. Residues 303–356 are Extracellular-facing; the sequence is KRRGAELAYKWGTLDSPGEAVEEPRPQFRGVRRISPITRAEEFYYPPWKRLLFQ. Serine 318 carries the phosphoserine modification. The chain crosses the membrane as a helical span at residues 357-377; it reads LLVSLPLCLACLVCVFLLMLG. Residues 378–400 are Cytoplasmic-facing; that stretch reads CFQLQELVLSVKGLPRLARFLPK. The chain crosses the membrane as a helical span at residues 401–421; sequence VMLALLVSVSAEGYKKLAIWL. Residues 422–437 lie on the Extracellular side of the membrane; the sequence is NDMENYRLESAYEKHL. The chain crosses the membrane as a helical span at residues 438–458; that stretch reads IIKVVLFQFVNSYLSLFYIGF. At 459–750 the chain is on the cytoplasmic side; it reads YLKDMERLKE…YEDTFQDYQE (292 aa). Residues 524–650 are disordered; that stretch reads RRLEPQADEG…SPTMVEKGLE (127 aa). Over residues 532–551 the composition is skewed to gly residues; that stretch reads EGGGGGSGGGGRRCLSGGCG. A compositionally biased stretch (acidic residues) spans 582–606; the sequence is EEDEDDEEEEDEEEEEDEEEGEEGG. At serine 669 the chain carries Phosphoserine. The tract at residues 681-728 is disordered; sequence RAGGEGRDQGPDGGPDPEPGSNSDSTRRQRRQNRSSWIDPPEEEHSPQ. A helical transmembrane segment spans residues 751–771; sequence MFVQFGYVVLFSSAFPLAALC. Topologically, residues 772 to 807 are extracellular; the sequence is ALVNNLIEIRSDAFKLCTGLQRPFGQRVESIGQWQK. Serine 801 is modified (phosphoserine; by FAM20C). Residues 808–828 form a helical membrane-spanning segment; sequence VMEAMGVLAIVVNCYLIGQCG. Residues 829–841 lie on the Cytoplasmic side of the membrane; sequence QLQRLFPWLSPEA. A helical membrane pass occupies residues 842–862; it reads AIVSVVVLEHFALLLKYLIHV. Topologically, residues 863 to 1232 are extracellular; that stretch reads AIPDIPGWVA…QAVCWPSGWH (370 aa). Disordered regions lie at residues 888-970, 997-1152, and 1174-1232; these read RHER…GSLL, LAAA…WQWD, and PPCA…SGWH. A compositionally biased stretch (basic and acidic residues) spans 904-932; it reads RREEEERQRHAEHHARREHDSGGREEARA. 2 stretches are compositionally biased toward low complexity: residues 933 to 953 and 997 to 1006; these read EGSGLDPATSSEKASAKAKGS and LAAAGAGATT. At arginine 1020 the chain carries Asymmetric dimethylarginine; alternate. Arginine 1020 is modified (omega-N-methylarginine; alternate). Residues 1031-1043 show a composition bias toward basic and acidic residues; the sequence is KSPETRRDSERSH. Residues 1078–1087 are compositionally biased toward polar residues; sequence TPSSGSSRVQ. 2 stretches are compositionally biased toward pro residues: residues 1130 to 1145 and 1197 to 1221; these read PAPPPPMPLPRPPTPP and LPPPPLPPTSDPLETPAPSPSPSPS.

The protein belongs to the anoctamin family. As to expression, expressed in embryonic stem cells, fetal brain and neural tissues.

It localises to the cell membrane. Does not exhibit calcium-activated chloride channel (CaCC) activity. This Homo sapiens (Human) protein is Anoctamin-8 (ANO8).